We begin with the raw amino-acid sequence, 244 residues long: Mannose-binding protein C (244 aa).

The signal sequence occupies residues 1–18 (MSIFTSFLLLCVVTVVYA). Residues 38–96 (GLNGFPGKDGRDGAKGEKGEPGQGLRGLQGPPGKVGPTGPPGNPGLKGAVGPKGDRGDR) form the Collagen-like domain. Positions 40 to 101 (NGFPGKDGRD…DRGDRAEFDT (62 aa)) are disordered. 4-hydroxyproline is present on Pro43. Positions 45-57 (KDGRDGAKGEKGE) are enriched in basic and acidic residues. 4-hydroxyproline is present on residues Pro58, Pro69, Pro78, and Pro81. Over residues 65-74 (LQGPPGKVGP) the composition is skewed to low complexity. Basic and acidic residues predominate over residues 90-99 (KGDRGDRAEF). Residues 108–126 (IAALRSELRALRNWVLFSL) adopt a coiled-coil conformation. The 113-residue stretch at 129-241 (KVGKKYFVSS…CSDSFLAICE (113 aa)) folds into the C-type lectin domain. 2 cysteine pairs are disulfide-bonded: Cys151-Cys240 and Cys218-Cys232. Asn210 carries N-linked (GlcNAc...) asparagine glycosylation.

In terms of assembly, oligomeric complex of 3 or more homotrimers. Interacts with MASP1 and MASP2. Interacts with MEP1A and MEP1B and may inhibit their catalytic activity. Hydroxylation on proline residues within the sequence motif, GXPG, is most likely to be 4-hydroxy as this fits the requirement for 4-hydroxylation in vertebrates.

It localises to the secreted. In terms of biological role, calcium-dependent lectin involved in innate immune defense. Binds mannose, fucose and N-acetylglucosamine on different microorganisms and activates the lectin complement pathway. Binds to late apoptotic cells, as well as to apoptotic blebs and to necrotic cells, but not to early apoptotic cells, facilitating their uptake by macrophages. This is Mannose-binding protein C (Mbl2) from Mus musculus (Mouse).